Consider the following 252-residue polypeptide: Probable endonuclease 4 (252 aa).

Zn(2+)-binding residues include His-56, His-96, Glu-129, Asp-162, His-165, His-191, Asp-204, His-206, and Glu-233.

Belongs to the AP endonuclease 2 family. It depends on Zn(2+) as a cofactor.

The enzyme catalyses Endonucleolytic cleavage to 5'-phosphooligonucleotide end-products.. In terms of biological role, endonuclease IV plays a role in DNA repair. It cleaves phosphodiester bonds at apurinic or apyrimidinic (AP) sites, generating a 3'-hydroxyl group and a 5'-terminal sugar phosphate. In Mycobacterium leprae (strain Br4923), this protein is Probable endonuclease 4.